We begin with the raw amino-acid sequence, 261 residues long: Putative [LysW]-aminoadipate/[LysW]-glutamate kinase (261 aa).

Residues 35–36, Arg-62, and Asn-162 contribute to the substrate site; that span reads GG.

It belongs to the acetylglutamate kinase family. LysZ subfamily.

It localises to the cytoplasm. It catalyses the reaction [amino-group carrier protein]-C-terminal-N-(1,4-dicarboxybutan-1-yl)-L-glutamine + ATP = [amino-group carrier protein]-C-terminal-N-(1-carboxy-5-phosphooxy-5-oxopentan-1-yl)-L-glutamine + ADP. The enzyme catalyses [amino-group carrier protein]-C-terminal-gamma-(L-glutamyl)-L-glutamate + ATP = [amino-group carrier protein]-C-terminal-gamma-(5-phospho-L-glutamyl)-L-glutamate + ADP. Its pathway is amino-acid biosynthesis; L-lysine biosynthesis via AAA pathway; L-lysine from L-alpha-aminoadipate (Thermus route): step 2/5. It participates in amino-acid biosynthesis; L-arginine biosynthesis. Its function is as follows. Involved in both the arginine and lysine biosynthetic pathways. Phosphorylates the LysW-bound precursors glutamate (for arginine biosynthesis), respectively alpha-aminoadipate (for lysine biosynthesis). This Pyrobaculum calidifontis (strain DSM 21063 / JCM 11548 / VA1) protein is Putative [LysW]-aminoadipate/[LysW]-glutamate kinase.